We begin with the raw amino-acid sequence, 157 residues long: 2-C-methyl-D-erythritol 2,4-cyclodiphosphate synthase (157 aa).

Residues aspartate 9 and histidine 11 each contribute to the a divalent metal cation site. 4-CDP-2-C-methyl-D-erythritol 2-phosphate is bound by residues aspartate 9–histidine 11 and histidine 35–serine 36. Histidine 43 is a binding site for a divalent metal cation. Residues aspartate 57–glycine 59, phenylalanine 62–aspartate 66, threonine 133–glutamate 136, phenylalanine 140, and lysine 143 each bind 4-CDP-2-C-methyl-D-erythritol 2-phosphate.

This sequence belongs to the IspF family. Homotrimer. It depends on a divalent metal cation as a cofactor.

The catalysed reaction is 4-CDP-2-C-methyl-D-erythritol 2-phosphate = 2-C-methyl-D-erythritol 2,4-cyclic diphosphate + CMP. It participates in isoprenoid biosynthesis; isopentenyl diphosphate biosynthesis via DXP pathway; isopentenyl diphosphate from 1-deoxy-D-xylulose 5-phosphate: step 4/6. Functionally, involved in the biosynthesis of isopentenyl diphosphate (IPP) and dimethylallyl diphosphate (DMAPP), two major building blocks of isoprenoid compounds. Catalyzes the conversion of 4-diphosphocytidyl-2-C-methyl-D-erythritol 2-phosphate (CDP-ME2P) to 2-C-methyl-D-erythritol 2,4-cyclodiphosphate (ME-CPP) with a corresponding release of cytidine 5-monophosphate (CMP). This chain is 2-C-methyl-D-erythritol 2,4-cyclodiphosphate synthase, found in Enterococcus faecalis (strain ATCC 700802 / V583).